A 392-amino-acid polypeptide reads, in one-letter code: Fasciculation and elongation protein zeta-1 (392 aa).

The disordered stretch occupies residues 1–37 (MEAPLVSLDEEFEDLRPSCSEDPEEKPQCFYGSSPHH). Residue Ser58 is modified to Phosphoserine. The segment at 175 to 198 (MQNSPDPEEEEEVLEEEDGGETSS) is disordered. The segment covering 180–194 (DPEEEEEVLEEEDGG) has biased composition (acidic residues). A coiled-coil region spans residues 230–298 (SELTELLDQV…KKRRKEKGLS (69 aa)). Phosphoserine is present on residues Ser298 and Ser316.

It belongs to the zygin family. Homodimer; disulfide-linked. May form heterodimers with FEZ2. Interacts with the NH2-terminal variable region (V1) of PKC zeta and weakly with that of PKC epsilon. Interacts with UBE4B. Interacts with SAP30L. Interacts with SCOC and ULK1; SCOC interferes with ULK1-binding to FEZ1. Directly interacts with SCOC and UVRAG. Stabilizes the interaction between SCOC and UVRAG during amino acid starvation. Post-translationally, phosphorylated by protein kinase C zeta; which enhances interaction with UBE4B and polyubiquitination. Polyubiquitinated in a UBE4B-dependent manner; which does not lead to proteasomal degradation and may be important for neurogenic activity. Polyubiquitin linkage seems to be mainly through Lys-26. Mainly expressed in brain.

The protein resides in the cytoplasm. The protein localises to the cytoskeleton. It is found in the microtubule organizing center. It localises to the centrosome. Its subcellular location is the cell membrane. May be involved in axonal outgrowth as component of the network of molecules that regulate cellular morphology and axon guidance machinery. Able to restore partial locomotion and axonal fasciculation to C.elegans unc-76 mutants in germline transformation experiments. May participate in the transport of mitochondria and other cargos along microtubules. The protein is Fasciculation and elongation protein zeta-1 (FEZ1) of Homo sapiens (Human).